We begin with the raw amino-acid sequence, 716 residues long: Photosystem I P700 chlorophyll a apoprotein A1 (716 aa).

The next 8 helical transmembrane spans lie at 57–80 (VFSAHFGQLAIILIWLSGMYFHGA), 143–166 (LYCTAIGGLIFAGLMLFAGWFHYH), 182–206 (LNHHLAGLLGLGSLSWAGHQVHVSL), 278–296 (TVHHHLAIAILFLIAGHMY), 333–356 (WHAQLALNLAMLGSLTIVVAHHMY), 372–398 (LSLFTHHMWIGGFLIVGAAAHAAIFMV), 420–442 (AIISHLNWVCIFLGFHSFGLYIH), and 518–536 (FLVHHIHAFTIHVTVLILL). Cys-560 and Cys-569 together coordinate [4Fe-4S] cluster. A run of 2 helical transmembrane segments spans residues 576-597 (HVFLGLFWMYNAISVVIFHFSW) and 651-673 (LSAYGLLFLGAHFVWAFSLMFLF). Chlorophyll a' is bound at residue His-662. Met-670 and Tyr-678 together coordinate chlorophyll a. Position 679 (Trp-679) interacts with phylloquinone. Residues 711–716 (AVGVAH) traverse the membrane as a helical segment.

The protein belongs to the PsaA/PsaB family. In terms of assembly, the PsaA/B heterodimer binds the P700 chlorophyll special pair and subsequent electron acceptors. PSI consists of a core antenna complex that captures photons, and an electron transfer chain that converts photonic excitation into a charge separation. The eukaryotic PSI reaction center is composed of at least 11 subunits. P700 is a chlorophyll a/chlorophyll a' dimer, A0 is one or more chlorophyll a, A1 is one or both phylloquinones and FX is a shared 4Fe-4S iron-sulfur center. serves as cofactor.

It localises to the plastid. The protein resides in the chloroplast thylakoid membrane. The catalysed reaction is reduced [plastocyanin] + hnu + oxidized [2Fe-2S]-[ferredoxin] = oxidized [plastocyanin] + reduced [2Fe-2S]-[ferredoxin]. PsaA and PsaB bind P700, the primary electron donor of photosystem I (PSI), as well as the electron acceptors A0, A1 and FX. PSI is a plastocyanin-ferredoxin oxidoreductase, converting photonic excitation into a charge separation, which transfers an electron from the donor P700 chlorophyll pair to the spectroscopically characterized acceptors A0, A1, FX, FA and FB in turn. Oxidized P700 is reduced on the lumenal side of the thylakoid membrane by plastocyanin. This is Photosystem I P700 chlorophyll a apoprotein A1 from Araucaria araucana (Monkey-puzzle tree).